A 100-amino-acid chain; its full sequence is Eukaryotic translation initiation factor 4E-binding protein 3 (100 aa).

The YXXXXLphi motif motif lies at 40-46 (YDRKFLL). Residues 81–100 (LKEQETEEEIPDDAQFEMDI) form a disordered region. Positions 85 to 100 (ETEEEIPDDAQFEMDI) are enriched in acidic residues. The TOS motif motif lies at 96 to 100 (FEMDI).

This sequence belongs to the eIF4E-binding protein family. In terms of assembly, interacts with EIF4E. Interacts with RPA2 (in unphosphorylated form via N-terminus); the interaction enhances EIF4EBP3-mediated inhibition of EIF4E-mediated mRNA nuclear export. Phosphorylated. As to expression, expression is highest in skeletal muscle, heart, kidney, and pancreas, whereas there is very little expression in brain and thymus.

It localises to the cytoplasm. The protein resides in the nucleus. Functionally, repressor of translation initiation that regulates EIF4E activity by preventing its assembly into the eIF4F complex: the hypophosphorylated form competes with EIF4G1/EIF4G3 and strongly binds to EIF4E, leading to repression of translation. In contrast, the hyperphosphorylated form dissociates from EIF4E, allowing interaction between EIF4G1/EIF4G3 and EIF4E, leading to initiation of translation. Inhibits EIF4E-mediated mRNA nuclear export. The polypeptide is Eukaryotic translation initiation factor 4E-binding protein 3 (EIF4EBP3) (Homo sapiens (Human)).